Here is a 294-residue protein sequence, read N- to C-terminus: Light-independent protochlorophyllide reductase iron-sulfur ATP-binding protein (294 aa).

Residues 10–15 (GIGKST) and K39 each bind ATP. S14 lines the Mg(2+) pocket. 2 residues coordinate [4Fe-4S] cluster: C95 and C129. 180 to 181 (NR) lines the ATP pocket.

It belongs to the NifH/BchL/ChlL family. As to quaternary structure, homodimer. Protochlorophyllide reductase is composed of three subunits; ChlL, ChlN and ChlB. Requires [4Fe-4S] cluster as cofactor.

The protein localises to the plastid. The protein resides in the chloroplast. The catalysed reaction is chlorophyllide a + oxidized 2[4Fe-4S]-[ferredoxin] + 2 ADP + 2 phosphate = protochlorophyllide a + reduced 2[4Fe-4S]-[ferredoxin] + 2 ATP + 2 H2O. It functions in the pathway porphyrin-containing compound metabolism; chlorophyll biosynthesis (light-independent). In terms of biological role, component of the dark-operative protochlorophyllide reductase (DPOR) that uses Mg-ATP and reduced ferredoxin to reduce ring D of protochlorophyllide (Pchlide) to form chlorophyllide a (Chlide). This reaction is light-independent. The L component serves as a unique electron donor to the NB-component of the complex, and binds Mg-ATP. The polypeptide is Light-independent protochlorophyllide reductase iron-sulfur ATP-binding protein (Pleurastrum terricola (Filamentous green alga)).